The primary structure comprises 428 residues: D-amino acid dehydrogenase (428 aa).

3-17 (VVILGSGVVGVASAY) contributes to the FAD binding site.

This sequence belongs to the DadA oxidoreductase family. FAD serves as cofactor.

The enzyme catalyses a D-alpha-amino acid + A + H2O = a 2-oxocarboxylate + AH2 + NH4(+). The protein operates within amino-acid degradation; D-alanine degradation; NH(3) and pyruvate from D-alanine: step 1/1. Functionally, oxidative deamination of D-amino acids. The chain is D-amino acid dehydrogenase from Burkholderia lata (strain ATCC 17760 / DSM 23089 / LMG 22485 / NCIMB 9086 / R18194 / 383).